Reading from the N-terminus, the 190-residue chain is Holliday junction branch migration complex subunit RuvA (190 aa).

Positions 1-64 (MIGRITGTLI…EDAHLLYGFG (64 aa)) are domain I. The tract at residues 65-137 (TASERAAFRE…MRGKLGADIG (73 aa)) is domain II. The flexible linker stretch occupies residues 137–141 (GATPH). Positions 142-190 (AVPDSQSDILNALLALGYSEKESLAALKTLPEGLGVSDGIRQALKALAR) are domain III.

This sequence belongs to the RuvA family. As to quaternary structure, homotetramer. Forms an RuvA(8)-RuvB(12)-Holliday junction (HJ) complex. HJ DNA is sandwiched between 2 RuvA tetramers; dsDNA enters through RuvA and exits via RuvB. An RuvB hexamer assembles on each DNA strand where it exits the tetramer. Each RuvB hexamer is contacted by two RuvA subunits (via domain III) on 2 adjacent RuvB subunits; this complex drives branch migration. In the full resolvosome a probable DNA-RuvA(4)-RuvB(12)-RuvC(2) complex forms which resolves the HJ.

It is found in the cytoplasm. In terms of biological role, the RuvA-RuvB-RuvC complex processes Holliday junction (HJ) DNA during genetic recombination and DNA repair, while the RuvA-RuvB complex plays an important role in the rescue of blocked DNA replication forks via replication fork reversal (RFR). RuvA specifically binds to HJ cruciform DNA, conferring on it an open structure. The RuvB hexamer acts as an ATP-dependent pump, pulling dsDNA into and through the RuvAB complex. HJ branch migration allows RuvC to scan DNA until it finds its consensus sequence, where it cleaves and resolves the cruciform DNA. This is Holliday junction branch migration complex subunit RuvA from Bordetella avium (strain 197N).